A 629-amino-acid polypeptide reads, in one-letter code: DNA mismatch repair protein MutL (629 aa).

Belongs to the DNA mismatch repair MutL/HexB family.

This protein is involved in the repair of mismatches in DNA. It is required for dam-dependent methyl-directed DNA mismatch repair. May act as a 'molecular matchmaker', a protein that promotes the formation of a stable complex between two or more DNA-binding proteins in an ATP-dependent manner without itself being part of a final effector complex. The sequence is that of DNA mismatch repair protein MutL from Rhodospirillum rubrum (strain ATCC 11170 / ATH 1.1.1 / DSM 467 / LMG 4362 / NCIMB 8255 / S1).